The sequence spans 304 residues: Movement protein (304 aa).

Residues 257–304 (ETNKLSDVESSSDSSSLLSMRARSRRYTKNYKIPIKRHPQATGEVGTT) form a disordered region. Positions 264–277 (VESSSDSSSLLSMR) are enriched in low complexity. Positions 278–295 (ARSRRYTKNYKIPIKRHP) are enriched in basic residues.

Functionally, cell-to-cell movement and long-distance transport of the viral infection. Also acts as a suppressor of RNA-mediated gene silencing, also known as post-transcriptional gene silencing (PTGS), a mechanism of plant viral defense that limits the accumulation of viral RNAs. The sequence is that of Movement protein from Carnation ringspot virus (isolate Lommel) (CRSV).